A 200-amino-acid chain; its full sequence is MEKFTKHTGIGVPLRQSNVDTDQIIPAVYLKRITRTGFEDALFSAWRKDSSFILNQEPFNAGSVLVAGPDFGTGSSREHAVWALKDYGFRAVLSSRFADIFRGNSGKQGLLAAQVAQDDIELIWKELENAPGTQVTVDLESKTVVCGNIVAPFEIDDYTRWRLLEGLDDIGLTLQHEADITAYEATRPSFKPKTLPAKVS.

It belongs to the LeuD family. LeuD type 1 subfamily. As to quaternary structure, heterodimer of LeuC and LeuD.

The catalysed reaction is (2R,3S)-3-isopropylmalate = (2S)-2-isopropylmalate. It participates in amino-acid biosynthesis; L-leucine biosynthesis; L-leucine from 3-methyl-2-oxobutanoate: step 2/4. Its function is as follows. Catalyzes the isomerization between 2-isopropylmalate and 3-isopropylmalate, via the formation of 2-isopropylmaleate. The protein is 3-isopropylmalate dehydratase small subunit of Pseudarthrobacter chlorophenolicus (strain ATCC 700700 / DSM 12829 / CIP 107037 / JCM 12360 / KCTC 9906 / NCIMB 13794 / A6) (Arthrobacter chlorophenolicus).